Reading from the N-terminus, the 596-residue chain is Elongation factor 4 (596 aa).

Positions 2–183 (ENIRNFSIIA…AIIKRIPAPK (182 aa)) constitute a tr-type G domain. Residues 14–19 (DHGKST) and 130–133 (NKID) each bind GTP.

This sequence belongs to the TRAFAC class translation factor GTPase superfamily. Classic translation factor GTPase family. LepA subfamily.

It is found in the cell inner membrane. The enzyme catalyses GTP + H2O = GDP + phosphate + H(+). Functionally, required for accurate and efficient protein synthesis under certain stress conditions. May act as a fidelity factor of the translation reaction, by catalyzing a one-codon backward translocation of tRNAs on improperly translocated ribosomes. Back-translocation proceeds from a post-translocation (POST) complex to a pre-translocation (PRE) complex, thus giving elongation factor G a second chance to translocate the tRNAs correctly. Binds to ribosomes in a GTP-dependent manner. This chain is Elongation factor 4, found in Campylobacter hominis (strain ATCC BAA-381 / DSM 21671 / CCUG 45161 / LMG 19568 / NCTC 13146 / CH001A).